The chain runs to 84 residues: U4-theraphotoxin-Hhn1a (84 aa).

An N-terminal signal peptide occupies residues 1–22; it reads MKVTLIAIPTCAAVLVLHTTAA. Residues 23–47 constitute a propeptide that is removed on maturation; that stretch reads EELEESQLMEVGMPDTELAAVDEER. 3 disulfide bridges follow: Cys-51-Cys-65, Cys-55-Cys-76, and Cys-70-Cys-81.

The protein belongs to the neurotoxin 12 (Hwtx-2) family. 02 (Hwtx-2) subfamily. In terms of tissue distribution, expressed by the venom gland.

Its subcellular location is the secreted. Functionally, postsynaptic neurotoxin. In Cyriopagopus hainanus (Chinese bird spider), this protein is U4-theraphotoxin-Hhn1a.